The sequence spans 214 residues: Redox-sensing transcriptional repressor Rex (214 aa).

The segment at residues Leu-17–Phe-56 is a DNA-binding region (H-T-H motif). Residue Gly-91–Gly-96 participates in NAD(+) binding.

It belongs to the transcriptional regulatory Rex family. In terms of assembly, homodimer.

Its subcellular location is the cytoplasm. Functionally, modulates transcription in response to changes in cellular NADH/NAD(+) redox state. The chain is Redox-sensing transcriptional repressor Rex from Streptococcus pyogenes serotype M12 (strain MGAS9429).